Here is an 85-residue protein sequence, read N- to C-terminus: Elicitor peptide 7 (85 aa).

Residues M1–V62 constitute a propeptide that is removed on maturation. Residues N66–N85 are disordered.

Belongs to the brassicaceae elicitor peptide family.

In terms of biological role, elicitor of plant defense. This is Elicitor peptide 7 (PEP7) from Arabidopsis thaliana (Mouse-ear cress).